Consider the following 1009-residue polypeptide: Epididymis-specific alpha-mannosidase (1009 aa).

Residues 1–23 (MGQLCWLPLLAPLLLLRPPGVQS) form the signal peptide. The Zn(2+) site is built by His36, Asp38, and Asp151. The active-site Nucleophile is Asp151. Asn226, Asn249, Asn294, and Asn336 each carry an N-linked (GlcNAc...) asparagine glycan. His420 provides a ligand contact to Zn(2+). Residues Asn516, Asn608, Asn670, Asn675, Asn748, Asn808, Asn812, and Asn890 are each glycosylated (N-linked (GlcNAc...) asparagine). The segment at 972-991 (GPGRHRGDTTSPSRPPGGPI) is disordered.

The protein belongs to the glycosyl hydrolase 38 family. Zn(2+) serves as cofactor.

It localises to the secreted. It carries out the reaction Hydrolysis of terminal, non-reducing alpha-D-mannose residues in alpha-D-mannosides.. In Homo sapiens (Human), this protein is Epididymis-specific alpha-mannosidase (MAN2B2).